Here is a 39-residue protein sequence, read N- to C-terminus: Ribonuclease UK114 (39 aa).

It belongs to the RutC family. In terms of assembly, monomer. The N-terminus may be blocked. As to expression, mainly expressed in the liver and kidney. Lower expression found in intestine, gizzard, glandular stomach, heart, brain and spleen.

Its subcellular location is the cytoplasm. In terms of biological role, endoribonuclease responsible for the inhibition of the translation by cleaving mRNA. Inhibits cell-free protein synthesis. Cleaves phosphodiester bonds only in single-stranded RNA. This chain is Ribonuclease UK114, found in Gallus gallus (Chicken).